We begin with the raw amino-acid sequence, 602 residues long: Cholinesterase (602 aa).

An N-terminal signal peptide occupies residues Met1 to Thr28. N-linked (GlcNAc...) asparagine glycosylation occurs at Asn85. A disulfide bridge connects residues Cys93 and Cys120. The N-linked (GlcNAc...) asparagine glycan is linked to Asn134. Gly144–Gly145 contacts substrate. The active-site Acyl-ester intermediate is Ser226. Ser226 is subject to Phosphoserine. N-linked (GlcNAc...) asparagine glycosylation is found at Asn269 and Asn284. A disulfide bond links Cys280 and Cys291. The Charge relay system role is filled by Glu353. N-linked (GlcNAc...) asparagine glycosylation occurs at Asn369. A disulfide bridge connects residues Cys428 and Cys547. His466 serves as the catalytic Charge relay system. Asn483, Asn509, Asn513, and Asn514 each carry an N-linked (GlcNAc...) asparagine glycan.

Belongs to the type-B carboxylesterase/lipase family. In terms of assembly, homotetramer; disulfide-linked. Dimer of dimers.

It localises to the secreted. The enzyme catalyses an acylcholine + H2O = a carboxylate + choline + H(+). In terms of biological role, esterase with broad substrate specificity. Contributes to the inactivation of the neurotransmitter acetylcholine. Can degrade neurotoxic organophosphate esters. The chain is Cholinesterase (BCHE) from Panthera tigris tigris (Bengal tiger).